Here is a 443-residue protein sequence, read N- to C-terminus: POU domain, class 3, transcription factor 3-B (443 aa).

3 disordered regions span residues 21–40, 100–150, and 182–244; these read IVHS…VTSV, SPWS…AGAW, and NGML…PTSD. Residues 101 to 121 show a composition bias toward polar residues; that stretch reads PWSSSPVGMTGSPQQQDVKNN. Basic residues predominate over residues 210-225; that stretch reads SHHHHHHHQHQHHQQA. The POU-specific domain maps to 238-312; the sequence is EDTPTSDDLE…LLNKWLEEAD (75 aa). Serine 317 is modified (phosphoserine). The homeobox DNA-binding region spans 330–389; it reads KRKKRTSIEVSVKGALESHFLKCPKPSAQEITSLADNLQLEKEVVRVWFCNRRQKEKRMT.

Belongs to the POU transcription factor family. Class-3 subfamily. Predominantly expressed in the central nervous system.

It localises to the nucleus. Functionally, transcription factor that may play important roles in patterning the embryonic brain. This chain is POU domain, class 3, transcription factor 3-B (pou3f3b), found in Danio rerio (Zebrafish).